We begin with the raw amino-acid sequence, 62 residues long: Photosystem II reaction center protein Z (62 aa).

2 helical membrane passes run 8-28 (AVFA…VVFS) and 41-61 (FSGT…NSLI).

It belongs to the PsbZ family. In terms of assembly, PSII is composed of 1 copy each of membrane proteins PsbA, PsbB, PsbC, PsbD, PsbE, PsbF, PsbH, PsbI, PsbJ, PsbK, PsbL, PsbM, PsbT, PsbY, PsbZ, Psb30/Ycf12, at least 3 peripheral proteins of the oxygen-evolving complex and a large number of cofactors. It forms dimeric complexes.

Its subcellular location is the plastid. It localises to the chloroplast thylakoid membrane. Functionally, may control the interaction of photosystem II (PSII) cores with the light-harvesting antenna, regulates electron flow through the 2 photosystem reaction centers. PSII is a light-driven water plastoquinone oxidoreductase, using light energy to abstract electrons from H(2)O, generating a proton gradient subsequently used for ATP formation. In Populus alba (White poplar), this protein is Photosystem II reaction center protein Z.